The chain runs to 108 residues: UPF0060 membrane protein YnfA (108 aa).

At M1–T5 the chain is on the periplasmic side. Residues L6–I26 form a helical membrane-spanning segment. The Cytoplasmic portion of the chain corresponds to K27–A30. Residues S31–L51 traverse the membrane as a helical segment. Residues H52–Y60 are Periplasmic-facing. The helical transmembrane segment at A61 to V81 threads the bilayer. The Cytoplasmic portion of the chain corresponds to R82 to T84. The chain crosses the membrane as a helical span at residues V85–W105. Over G106–T108 the chain is Periplasmic.

This sequence belongs to the UPF0060 family.

It is found in the cell inner membrane. The protein is UPF0060 membrane protein YnfA of Salmonella dublin (strain CT_02021853).